A 344-amino-acid polypeptide reads, in one-letter code: Flavonoid 7-O-methyltransferase 1A (344 aa).

An S-adenosyl-L-methionine-binding site is contributed by D211. H249 serves as the catalytic Proton acceptor.

It belongs to the class I-like SAM-binding methyltransferase superfamily. Cation-independent O-methyltransferase family. As to quaternary structure, homodimer.

It catalyses the reaction apigenin + S-adenosyl-L-methionine = genkwanin + S-adenosyl-L-homocysteine + H(+). The enzyme catalyses luteolin + S-adenosyl-L-methionine = luteolin 7-methyl ether + S-adenosyl-L-homocysteine + H(+). It carries out the reaction quercetin + S-adenosyl-L-methionine = rhamnetin + S-adenosyl-L-homocysteine + H(+). The catalysed reaction is (2S)-naringenin + S-adenosyl-L-methionine = (2S)-sakuranetin + S-adenosyl-L-homocysteine + H(+). It catalyses the reaction kaempferol + S-adenosyl-L-methionine = kaempferol 7-methyl ether + S-adenosyl-L-homocysteine + H(+). The enzyme catalyses isorhamnetin + S-adenosyl-L-methionine = rhamnacene + S-adenosyl-L-homocysteine + H(+). It carries out the reaction 4',7,8-trihydroxyflavone + S-adenosyl-L-methionine = 4',8-dihydroxy-7-methoxyflavone + S-adenosyl-L-homocysteine. The catalysed reaction is scutellarein + S-adenosyl-L-methionine = scutellarein 7-methyl ether + S-adenosyl-L-homocysteine. Its pathway is flavonoid metabolism. In terms of biological role, flavonoid 7-O-methyltransferase involved in the biosynthesis of polymethoxylated flavonoids natural products such as pebrellin, aroma compounds which contribute to the flavor of peppermint, and exhibit pharmacological activities such as anti-allergic, anti-oxidant, antibacterial, anti-proliferative, and anti-inflammatory effects. Catalyzes S-adenosylmethionine-dependent regioselective 7-O-methylation of flavonoids; active on various hydroxylated flavonoid substrates, including luteolin (LUT), quercetin, kaempferol, isorhamnetin, apigenin (API), scutellarein (6-hydroxy-apigenin, 6-OH-API, SCU), 7,8,4'-trihydroxy-flavone and naringenin (NAR), and, with a lower efficiency, 7,8,3',4'-tetrahydroxy-flavone, taxifolin, hesperetin and genistein. The sequence is that of Flavonoid 7-O-methyltransferase 1A from Mentha piperita (Peppermint).